A 1245-amino-acid chain; its full sequence is ABC transporter B family member 13 (1245 aa).

Positions Met1–Ala14 are enriched in polar residues. The disordered stretch occupies residues Met1–Glu20. The 290-residue stretch at Met47 to Lys336 folds into the ABC transmembrane type-1 1 domain. The chain crosses the membrane as a helical span at residues Leu48 to Phe68. N-linked (GlcNAc...) asparagine glycosylation occurs at Asn77. A run of 5 helical transmembrane segments spans residues Leu94–Trp114, His171–Trp191, Leu195–Met215, Leu276–Ala296, and Ile314–Ile334. N-linked (GlcNAc...) asparagine glycans are attached at residues Asn351 and Asn391. Residues Ile372–Cys607 form the ABC transporter 1 domain. Gly406–Ser413 serves as a coordination point for ATP. Residues Thr610–Gly629 show a composition bias toward polar residues. The interval Thr610 to Asp660 is disordered. Positions Ser630 to Arg646 are enriched in low complexity. A compositionally biased stretch (basic and acidic residues) spans Val647–Asp660. Residues Ala681–Lys969 enclose the ABC transmembrane type-1 2 domain. 2 consecutive transmembrane segments (helical) span residues Ile686–Leu706 and Ala725–Phe745. A glycan (N-linked (GlcNAc...) asparagine) is linked at Asn778. Transmembrane regions (helical) follow at residues Ile805–Tyr822, Ala828–Leu848, Leu913–Ile933, and Phe947–Ile967. The ABC transporter 2 domain maps to Ile1004–Ser1240. N-linked (GlcNAc...) asparagine glycosylation is present at Asn1008. Gly1039–Ser1046 lines the ATP pocket. Asn1106 carries N-linked (GlcNAc...) asparagine glycosylation.

Belongs to the ABC transporter superfamily. ABCB family. Multidrug resistance exporter (TC 3.A.1.201) subfamily.

It localises to the membrane. The protein is ABC transporter B family member 13 (ABCB13) of Arabidopsis thaliana (Mouse-ear cress).